The chain runs to 36 residues: Allergen Act d 3 (36 aa).

Post-translationally, N-glycosylated.

The protein is Allergen Act d 3 of Actinidia deliciosa (Kiwi).